The primary structure comprises 161 residues: Cytochrome c-type biogenesis protein CcmE (161 aa).

The Cytoplasmic segment spans residues 1 to 8 (MNPRRKKR). Residues 9–29 (LTLAIALIGGVAAIASLLLYA) form a helical; Signal-anchor for type II membrane protein membrane-spanning segment. Topologically, residues 30-161 (LNSNLNLFYT…DYSQQKSAAQ (132 aa)) are periplasmic. The heme site is built by His-131 and Tyr-135. The disordered stretch occupies residues 138 to 161 (PEVAEAMGQKHEKLDYSQQKSAAQ).

This sequence belongs to the CcmE/CycJ family.

It localises to the cell inner membrane. Heme chaperone required for the biogenesis of c-type cytochromes. Transiently binds heme delivered by CcmC and transfers the heme to apo-cytochromes in a process facilitated by CcmF and CcmH. The chain is Cytochrome c-type biogenesis protein CcmE from Shewanella sp. (strain MR-4).